The following is a 111-amino-acid chain: Phosphoribosyl-ATP pyrophosphatase (111 aa).

It belongs to the PRA-PH family.

It localises to the cytoplasm. The catalysed reaction is 1-(5-phospho-beta-D-ribosyl)-ATP + H2O = 1-(5-phospho-beta-D-ribosyl)-5'-AMP + diphosphate + H(+). It functions in the pathway amino-acid biosynthesis; L-histidine biosynthesis; L-histidine from 5-phospho-alpha-D-ribose 1-diphosphate: step 2/9. This chain is Phosphoribosyl-ATP pyrophosphatase, found in Pseudomonas paraeruginosa (strain DSM 24068 / PA7) (Pseudomonas aeruginosa (strain PA7)).